Here is a 453-residue protein sequence, read N- to C-terminus: Citrate (Re)-synthase (453 aa).

The 271-residue stretch at 46-316 (IYITDTTFRD…TKNMKLHVIT (271 aa)) folds into the Pyruvate carboxyltransferase domain.

This sequence belongs to the alpha-IPM synthase/homocitrate synthase family. Mn(2+) serves as cofactor. Co(2+) is required as a cofactor. The cofactor is Mg(2+).

The enzyme catalyses oxaloacetate + acetyl-CoA + H2O = citrate + CoA + H(+). Inhibited by p-chloromercuribenzoate (pCMB), EDTA, Zn(2+) ions, and under aerobic conditions. Its function is as follows. Catalyzes the condensation of the acetyl group of acetyl-CoA with oxaloacetate to form citrate. This enzyme is highly Re-face stereospecific with respect to the C-2 of oxaloacetate. In Clostridium kluyveri (strain ATCC 8527 / DSM 555 / NBRC 12016 / NCIMB 10680 / K1), this protein is Citrate (Re)-synthase.